Here is a 135-residue protein sequence, read N- to C-terminus: uncharacterized protein (135 aa).

This is an uncharacterized protein from Rickettsia prowazekii (strain Madrid E).